We begin with the raw amino-acid sequence, 291 residues long: 33 kDa chaperonin (291 aa).

2 cysteine pairs are disulfide-bonded: C229–C231 and C262–C265.

The protein belongs to the HSP33 family. Post-translationally, under oxidizing conditions two disulfide bonds are formed involving the reactive cysteines. Under reducing conditions zinc is bound to the reactive cysteines and the protein is inactive.

The protein resides in the cytoplasm. Redox regulated molecular chaperone. Protects both thermally unfolding and oxidatively damaged proteins from irreversible aggregation. Plays an important role in the bacterial defense system toward oxidative stress. This Aliivibrio fischeri (strain ATCC 700601 / ES114) (Vibrio fischeri) protein is 33 kDa chaperonin.